The primary structure comprises 382 residues: MSTSAPLLSRYRQLSPAASIRVSPLCLGAMTFGVSDGEMFGECSKEMAFAILDHFYQQGGNFIDTANGYRAGESEMWLGEWMASRKNRDDIVLATKYAAGYRGHEKNRIQVNYGGTGTKSMRLSVDASLQKLQTSYIDLLYVHWWDYTVSIPELMHALNDLVASGKVHYLGISDSPAWVVSKANQYARDHGLRQFVVYQGLWNAAKRDLERDILPMCLDEGMGLCPYGVLNQGRFRTEEGFRDRDQTNNAGGRNIIPLSEHDRSVSRVLDIVATSKGVPLLQVALAYVMQKAPYVFPIVGVRKVDHLTGVEPAVHISLTDEEVNAIENAYEFDPGFPHTFLSGSMFAQGPPKGGYSPDVVWWTKMLGTFDWVEGAKPIRPQP.

Position 64 (aspartate 64) interacts with NADP(+). The Proton donor role is filled by tyrosine 69. Histidine 143 lines the substrate pocket. NADP(+) is bound by residues 173 to 174 (SD), glutamine 199, 228 to 238 (GVLNQGRFRTE), and 302 to 310 (RKVDHLTGV).

The protein belongs to the aldo/keto reductase family. Aldo/keto reductase 2 subfamily.

It functions in the pathway mycotoxin biosynthesis; aflatoxin biosynthesis. Norsolorinic acid reductase; part of the gene cluster that mediates the biosynthesis of aflatoxins, a group of polyketide-derived furanocoumarins, and part of the most toxic and carcinogenic compounds among the known mycotoxins. The four major aflatoxins produced by A.parasiticus are aflatoxin B1 (AFB1), aflatoxin B2 (AFB2), aflatoxin G1 (AFG1) and aflatoxin G2 (AFG2). Within the aflatoxin pathway, the norsolorinic acid reductase aflE may play a role in the conversion of norsolorinic acid (NOR) to averantin (AVN). The biosynthesis of aflatoxins begins with the norsolorinic acid synthase aflC that combines a hexanoyl starter unit produced by the fatty acid synthase aflA/aflB and 7 malonyl-CoA extender units to synthesize the precursor NOR. The second step is the conversion of NOR to averantin and requires the norsolorinic acid ketoreductase aflD, which catalyzes the dehydration of norsolorinic acid to form (1'S)-averantin. The norsolorinic acid reductases aflE and aflF may also play a role in the conversion of NOR to AVN. The cytochrome P450 monooxygenase aflG then catalyzes the hydroxylation of AVN to 5'hydroxyaverantin (HAVN). The next step is performed by the 5'-hydroxyaverantin dehydrogenase aflH that transforms HAVN to 5'-oxoaverantin (OAVN) which is further converted to averufin (AVF) by aflK that plays a dual role in the pathway, as a 5'-oxoaverantin cyclase that mediates conversion of 5'-oxoaverantin, as well as a versicolorin B synthase in a later step in the pathway. The averufin oxidase aflI catalyzes the conversion of AVF to versiconal hemiacetal acetate (VHA). VHA is then the substrate for the versiconal hemiacetal acetate esterase aflJ to yield versiconal (VAL). Versicolorin B synthase aflK then converts VAL to versicolorin B (VERB) by closing the bisfuran ring of aflatoxin which is required for DNA-binding, thus giving to aflatoxin its activity as a mutagen. Then, the activity of the versicolorin B desaturase aflL leads to versicolorin A (VERA). A branch point starts from VERB since it can also be converted to dihydrodemethylsterigmatocystin (DMDHST), probably also by aflL, VERA being a precursor for aflatoxins B1 and G1, and DMDHST for aflatoxins B2 and G2. Next, the versicolorin reductase aflM and the cytochrome P450 monooxygenase aflN are involved in conversion of VERA to demethylsterigmatocystin (DMST). AflX and aflY seem also involved in this step, through probable aflX-mediated epoxide ring-opening step following versicolorin A oxidation and aflY-mediated Baeyer-Villiger oxidation required for the formation of the xanthone ring. The methyltransferase aflO then leads to the modification of DMST to sterigmatocystin (ST), and of DMDHST to dihydrosterigmatocystin (DHST). Both ST and DHST are then substrates of the O-methyltransferase aflP to yield O-methylsterigmatocystin (OMST) and dihydro-O-methylsterigmatocystin (DHOMST), respectively. Finally OMST is converted to aflatoxins B1 and G1, and DHOMST to aflatoxins B2 and G2, via the action of several enzymes including O-methylsterigmatocystin oxidoreductase aflQ, the cytochrome P450 monooxygenase aflU, but also the NADH-dependent flavin oxidoreductase nadA which is specifically required for the synthesis of AFG1. The protein is Norsolorinic acid reductase B of Aspergillus parasiticus (strain ATCC 56775 / NRRL 5862 / SRRC 143 / SU-1).